The sequence spans 368 residues: Peptide chain release factor 2 (368 aa).

N5-methylglutamine is present on Gln-250.

It belongs to the prokaryotic/mitochondrial release factor family. In terms of processing, methylated by PrmC. Methylation increases the termination efficiency of RF2.

The protein resides in the cytoplasm. In terms of biological role, peptide chain release factor 2 directs the termination of translation in response to the peptide chain termination codons UGA and UAA. This chain is Peptide chain release factor 2, found in Rickettsia felis (strain ATCC VR-1525 / URRWXCal2) (Rickettsia azadi).